We begin with the raw amino-acid sequence, 511 residues long: Cytochrome P450 monooxygenase nodR (511 aa).

The helical transmembrane segment at 8 to 28 (ILFPISWEQSPIFLAVGLIFA) threads the bilayer. N-linked (GlcNAc...) asparagine glycosylation is found at Asn-76 and Asn-373. Cys-452 is a heme binding site.

It belongs to the cytochrome P450 family. Requires heme as cofactor.

The protein localises to the membrane. It functions in the pathway secondary metabolite biosynthesis. Functionally, cytochrome P450 monooxygenase; part of the gene cluster that mediates the biosynthesis of the indole diterpenes nodulisporic acids (NA). Nodulisporic acid A (NAA) and its chemically modified derivatives are of particular significance because of their highly potent insecticidal activity against blood-feeding arthropods and lack of observable adverse effects on mammals, in particular the tremogenicity associated with the paspaline-derived IDTs is not observed. The geranylgeranyl diphosphate (GGPP) synthase ggs1, localized outside of the cluster, is proposed to catalyze the first step in nodulisporic acid biosynthesis via conversion of farnesyl pyrophosphate and isopentyl pyrophosphate into geranylgeranyl pyrophosphate (GGPP). Condensation of indole-3-glycerol phosphate with GGPP by the prenyl transferase nodC then forms 3-geranylgeranylindole (3-GGI). Epoxidation by the FAD-dependent monooxygenase nodM leads to a single-epoxidized-GGI that is substrate of the terpene cyclase nodB for cyclization to yield emindole SB. The terminal methyl carbon, C28, of emindole SB is then oxidized by the cytochrome P450 monooxygenase nodW to produce nodulisporic acid F (NAF), the pentacyclic core of NAA. NAF is converted to nodulisporic acid E (NAE) via prenylation. This step is probably performed by one of the indole diterpene prenyltransferases nodD1 or nodD2. Several oxidation steps performed by the FAD-linked oxidoreductase nodO and one of the cytochrome P450 monooxygenase nodR, nodX or nodZ further convert NAE to nodulisporic acid D (NAD). NAD is substrate of cytochrome P450 monooxygenase nodJ to produce the precursor of nodulisporic acid C (NAC), converted to NAC by one of the indole diterpene prenyltransferases nodD1 or nodD2. The FAD-dependent monooxygenase nodY2 then oxidizes NAC to nodulisporic acid B (NAB). Finally NAB is converted to NAA by one of the cytochrome P450 monooxygenases nodR, nodX or nodZ. The sequence is that of Cytochrome P450 monooxygenase nodR from Hypoxylon pulicicidum.